We begin with the raw amino-acid sequence, 365 residues long: MLRTPLYELCRTGGGRMVPFAGWEMPVQFSGLIQEHKAVRNSVGMFDISHMGVLRLEGANPKDTLQQLVPSDLHRIGPGEACYTVLLNDQGGIRDDLIIYDLGAIDEKRGALVLVINAACADSDTAWIRERMEPAGLTVTDIKNNGVLLALQGPQAIPLLEQLSGEDLSGLPRFGHRDLQIQGLSNSVFTARTGYTGEDGAELLLTAEDGQLLWSQLLEKGVAPCGLGARDTLRLEAAMHLYGQDMNADTNPFEAGLGWLVHLEMPADFIGRQALERAAETGPNKRLVGLKLEGRAIARHDYPVLHNGEPVGVVTSGTWSPTLEEPIALASIPTALAKLGTNLSVEIRGKAQPATVVRRPFYKRP.

This sequence belongs to the GcvT family. The glycine cleavage system is composed of four proteins: P, T, L and H.

It carries out the reaction N(6)-[(R)-S(8)-aminomethyldihydrolipoyl]-L-lysyl-[protein] + (6S)-5,6,7,8-tetrahydrofolate = N(6)-[(R)-dihydrolipoyl]-L-lysyl-[protein] + (6R)-5,10-methylene-5,6,7,8-tetrahydrofolate + NH4(+). The glycine cleavage system catalyzes the degradation of glycine. The protein is Aminomethyltransferase of Synechococcus sp. (strain CC9902).